The sequence spans 316 residues: Protoheme IX farnesyltransferase (316 aa).

9 consecutive transmembrane segments (helical) span residues 29-49 (IIPLLLITTAASMWIASEGRV), 54-74 (LLITLLGGTLAAASAQTLNCI), 102-122 (LIFALALGVLSFALLATFVNV), 123-143 (LSGCLALSGIVFYMLVYTHWL), 151-171 (IVIGGAAGSIPPLVGWAAVTG), 179-199 (VLFALIFLWTPPHFWALALMI), 224-241 (IWYYSLLVVPFSLLLVYP), 245-267 (LGILYLAIAIILGGQFLVKAWQL), and 283-303 (FSIFYLMLLCLAMVIDSLPVT).

The protein belongs to the UbiA prenyltransferase family. Protoheme IX farnesyltransferase subfamily.

The protein resides in the cell inner membrane. The catalysed reaction is heme b + (2E,6E)-farnesyl diphosphate + H2O = Fe(II)-heme o + diphosphate. It functions in the pathway porphyrin-containing compound metabolism; heme O biosynthesis; heme O from protoheme: step 1/1. Converts heme B (protoheme IX) to heme O by substitution of the vinyl group on carbon 2 of heme B porphyrin ring with a hydroxyethyl farnesyl side group. The protein is Protoheme IX farnesyltransferase of Synechocystis sp. (strain ATCC 27184 / PCC 6803 / Kazusa).